Consider the following 900-residue polypeptide: Serine-rich coiled-coil domain-containing protein 1 (900 aa).

Disordered stretches follow at residues 1–100 and 156–178; these read MGDS…HSNM and KSEG…QSTR. Positions 29–56 are enriched in low complexity; it reads LPSSPSSSNTVGVHSSSPSSTNSSSGST. Polar residues predominate over residues 81–100; it reads EPTNQNLSISNGAQPGHSNM. A coiled-coil region spans residues 673–707; sequence MKDECSMLKLQLKEKDELISQLQEELGKVRHLQKA.

This sequence belongs to the CCSER family.

In Homo sapiens (Human), this protein is Serine-rich coiled-coil domain-containing protein 1 (CCSER1).